The sequence spans 197 residues: Nucleoid occlusion factor SlmA (197 aa).

Positions 7-67 constitute an HTH tetR-type domain; the sequence is INRREHILQC…GLIEFIEESL (61 aa). Residues 30–49 constitute a DNA-binding region (H-T-H motif); it reads TTAKLAAEVGVSEAALYRHF. A coiled-coil region spans residues 109-136; it reads DALLGENERLRSRISQLFAKIETHLKQI.

It belongs to the nucleoid occlusion factor SlmA family. Homodimer. Interacts with FtsZ.

It localises to the cytoplasm. The protein localises to the nucleoid. Functionally, required for nucleoid occlusion (NO) phenomenon, which prevents Z-ring formation and cell division over the nucleoid. Acts as a DNA-associated cell division inhibitor that binds simultaneously chromosomal DNA and FtsZ, and disrupts the assembly of FtsZ polymers. SlmA-DNA-binding sequences (SBS) are dispersed on non-Ter regions of the chromosome, preventing FtsZ polymerization at these regions. The chain is Nucleoid occlusion factor SlmA from Shewanella halifaxensis (strain HAW-EB4).